A 436-amino-acid polypeptide reads, in one-letter code: MQVSVENTTALERRMSITVPAERIETQVNKRLQQTAQKAKIAGFRPGKVPMSEIKRRFGADARQEAIGDVIQSSFYEAVVEQKLNPAGSPSIEPKSLEAGKDLEYVAVFEVFPEFTVAGFEGITVERLSADVADADLDKMLDILRKQNTRFEVADRAAQNEDQLNIDFVGKVDGEVFAGGSAKGTQLVLGSGRMIPGFEEGLVGAKAGEERVLNLTFPEDYQNLDLAGKTAEFTVTVNTVSEPKLPELNEEFFAQFGIKESGIDGFRTEVRKNMERELRQAIKSKVKNQVMDGLLATNPIEVPKALLSNEVDRLRVQAVQQFGGNIKPDQLPAELFEEQAKRRVVLGLIVAEVVKQFDLKPDEARVREMIQEMASAYQEPEQVVSWYYKNEQQLNEVRSVVLEEQVVDTVLQKASVTDKSVSYEEAVKPVEAPKAD.

Residues Glu161–Pro246 enclose the PPIase FKBP-type domain.

The protein belongs to the FKBP-type PPIase family. Tig subfamily.

The protein localises to the cytoplasm. It carries out the reaction [protein]-peptidylproline (omega=180) = [protein]-peptidylproline (omega=0). Functionally, involved in protein export. Acts as a chaperone by maintaining the newly synthesized protein in an open conformation. Functions as a peptidyl-prolyl cis-trans isomerase. The chain is Trigger factor from Pseudomonas fluorescens (strain Pf0-1).